Consider the following 284-residue polypeptide: Diaminopimelate epimerase (284 aa).

Asparagine 20, glutamine 53, and asparagine 73 together coordinate substrate. Cysteine 82 functions as the Proton donor in the catalytic mechanism. Substrate contacts are provided by residues 83 to 84 (GN), asparagine 167, asparagine 200, and 218 to 219 (ER). The active-site Proton acceptor is the cysteine 227. 228–229 (GS) provides a ligand contact to substrate.

The protein belongs to the diaminopimelate epimerase family. In terms of assembly, homodimer.

The protein resides in the cytoplasm. The enzyme catalyses (2S,6S)-2,6-diaminopimelate = meso-2,6-diaminopimelate. It functions in the pathway amino-acid biosynthesis; L-lysine biosynthesis via DAP pathway; DL-2,6-diaminopimelate from LL-2,6-diaminopimelate: step 1/1. Functionally, catalyzes the stereoinversion of LL-2,6-diaminopimelate (L,L-DAP) to meso-diaminopimelate (meso-DAP), a precursor of L-lysine and an essential component of the bacterial peptidoglycan. The sequence is that of Diaminopimelate epimerase from Xylella fastidiosa (strain M23).